Reading from the N-terminus, the 481-residue chain is MSKPIRVRYAPSPTGLLHIGNARTALFNYLYARRHGGTFIIRIEDTDRKRHVEDGERSQLENLKWLGMDWDESPETHENYRQSERLALYQQYIDQLLAEGKAYKSYVTEEELAAERERQEAAGETPRYINEFIGMSADEKAKYIAEREAAGIVPTVRLAVNESGIYKWADMVKGDIEFEGGNIGGDWVIQKKDGYPTYNFAVVVDDHDMQISHVIRGDDHIANTPKQLMVYEALGWEAPEFGHMTLIINSETGKKLSKRDTNTLQFIEDYRKKGYMPEAVFNFIALLGWNPGGEEEIFSREQLIALFDENRLSKSPAAFDQKKMDWMSNEYLKHADFETVYALCKPFLEEAGRLTEKAEKLVELYKPQLKSADEIIPLTDLFFSDFPELTEAEKEVMAGETVSTVLQAFKAKLEAMSDEDFKPENIFPQIKAVQKETGIKGKNLFMPIRIAVSGEMHGPELPNTIYLLGRDKSIEHIKNML.

Positions 11–21 match the 'HIGH' region motif; that stretch reads PSPTGLLHIGN. Positions 255-259 match the 'KMSKS' region motif; that stretch reads KLSKR. K258 is a binding site for ATP.

This sequence belongs to the class-I aminoacyl-tRNA synthetase family. Glutamate--tRNA ligase type 1 subfamily. Monomer.

The protein localises to the cytoplasm. It carries out the reaction tRNA(Glu) + L-glutamate + ATP = L-glutamyl-tRNA(Glu) + AMP + diphosphate. Functionally, catalyzes the attachment of glutamate to tRNA(Glu) in a two-step reaction: glutamate is first activated by ATP to form Glu-AMP and then transferred to the acceptor end of tRNA(Glu). This chain is Glutamate--tRNA ligase, found in Streptococcus pyogenes serotype M3 (strain ATCC BAA-595 / MGAS315).